Consider the following 258-residue polypeptide: Ribosomal RNA small subunit methyltransferase A (258 aa).

Residues Asn12, Leu14, Gly38, Glu59, Asp83, and Asn100 each contribute to the S-adenosyl-L-methionine site.

Belongs to the class I-like SAM-binding methyltransferase superfamily. rRNA adenine N(6)-methyltransferase family. RsmA subfamily.

The protein resides in the cytoplasm. The catalysed reaction is adenosine(1518)/adenosine(1519) in 16S rRNA + 4 S-adenosyl-L-methionine = N(6)-dimethyladenosine(1518)/N(6)-dimethyladenosine(1519) in 16S rRNA + 4 S-adenosyl-L-homocysteine + 4 H(+). Its function is as follows. Specifically dimethylates two adjacent adenosines (A1518 and A1519) in the loop of a conserved hairpin near the 3'-end of 16S rRNA in the 30S particle. May play a critical role in biogenesis of 30S subunits. The sequence is that of Ribosomal RNA small subunit methyltransferase A from Metamycoplasma arthritidis (strain 158L3-1) (Mycoplasma arthritidis).